Here is a 647-residue protein sequence, read N- to C-terminus: Auxin efflux carrier component 2 (647 aa).

Topologically, residues 1–7 (MITGKDM) are extracellular. A helical transmembrane segment spans residues 8–28 (YDVLAAMVPLYVAMILAYGSV). Over 29–38 (RWWGIFTPDQ) the chain is Cytoplasmic. The helical transmembrane segment at 39–59 (CSGINRFVAVFAVPLLSFHFI) threads the bilayer. Val51 is a (indol-3-yl)acetate binding site. Topologically, residues 60 to 68 (SSNDPYAMN) are extracellular. Residues 69–89 (YHFLAADSLQKVVILAALFLW) traverse the membrane as a helical segment. The Cytoplasmic segment spans residues 90-100 (QAFSRRGSLEW). The helical transmembrane segment at 101–121 (MITLFSLSTLPNTLVMGIPLL) threads the bilayer. The (indol-3-yl)acetate site is built by Asn112 and Leu114. The Extracellular segment spans residues 122–131 (RAMYGDFSGN). Residues 132–152 (LMVQIVVLQSIIWYTLMLFLF) traverse the membrane as a helical segment. A (indol-3-yl)acetate-binding site is contributed by Tyr145. Residues 153–507 (EFRGAKLLIS…LIRNPNTYSS (355 aa)) lie on the Cytoplasmic side of the membrane. Residues Ser237, Ser258, and Ser310 each carry the phosphoserine modification. Residues 339–380 (SVPSYPPPNPMFTGSTSGASGVKKKESGGGGSGGGVGVGGQN) are disordered. The residue at position 354 (Thr354) is a Phosphothreonine. The segment covering 366-378 (GGGGSGGGVGVGG) has biased composition (gly residues). Ser393 is modified (phosphoserine). Disordered regions lie at residues 397–420 (EANA…KVSI) and 440–481 (PGRK…QQMP). Residues 508–528 (LFGLAWSLVSFKWNIKMPTIM) traverse the membrane as a helical segment. The Extracellular portion of the chain corresponds to 529–531 (SGS). Residues 532-552 (ISILSDAGLGMAMFSLGLFMA) traverse the membrane as a helical segment. At 553–568 (LQPKIIACGKSVAGFA) the chain is on the cytoplasmic side. A helical membrane pass occupies residues 569–589 (MAVRFLTGPAVIAATSIAIGI). At 590-592 (RGD) the chain is on the extracellular side. The helical transmembrane segment at 593–613 (LLHIAIVQAALPQGIVPFVFA) threads the bilayer. Ile607 and Val608 together coordinate (indol-3-yl)acetate. Topologically, residues 614–626 (KEYNVHPDILSTA) are cytoplasmic. The chain crosses the membrane as a helical span at residues 627 to 647 (VIFGMLVALPVTVLYYVLLGL).

It belongs to the auxin efflux carrier (TC 2.A.69.1) family. As to quaternary structure, homodimer. Interacts with FYPP1 and FYPP3. Component of a complex made of PINs (e.g. PIN1 and PIN2), MAB4/MELs (e.g. NPY1/MAB4 and NPY5/MEL1) and AGC kinases (e.g. D6PK and PID) at the plasma membrane. Binds directly to NPY1/MAB4, NPY5/MEL1 and PID. In terms of tissue distribution, root-specific. Localized to the cortex, epidermis and lateral root cap, predominantly at the upper side of cells.

The protein localises to the cell membrane. In terms of biological role, acts as a component of the auxin efflux carrier. Seems to be involved in the root-specific auxin transport, and mediates the root gravitropism. Its particular localization suggests a role in the translocation of auxin towards the elongation zone. Recrutes NPY proteins (e.g. NPY1/MAB4 and NPY5/MEL1) to the plasma membrane in a polar basal localization in root epidermis; this activity is optimized by AGC kinases-mediated (e.g. D6PK and PID) phosphorylation that limits their lateral diffusion-based escape. This chain is Auxin efflux carrier component 2, found in Arabidopsis thaliana (Mouse-ear cress).